The following is a 165-amino-acid chain: 2-C-methyl-D-erythritol 2,4-cyclodiphosphate synthase (165 aa).

2 residues coordinate a divalent metal cation: Asp-13 and His-15. 4-CDP-2-C-methyl-D-erythritol 2-phosphate contacts are provided by residues 13 to 15 and 39 to 40; these read DRH and HS. His-47 is a binding site for a divalent metal cation. 4-CDP-2-C-methyl-D-erythritol 2-phosphate is bound by residues 61–63 and Phe-141; that span reads DIG.

Belongs to the IspF family. In terms of assembly, homotrimer. The cofactor is a divalent metal cation.

The catalysed reaction is 4-CDP-2-C-methyl-D-erythritol 2-phosphate = 2-C-methyl-D-erythritol 2,4-cyclic diphosphate + CMP. The protein operates within isoprenoid biosynthesis; isopentenyl diphosphate biosynthesis via DXP pathway; isopentenyl diphosphate from 1-deoxy-D-xylulose 5-phosphate: step 4/6. Functionally, involved in the biosynthesis of isopentenyl diphosphate (IPP) and dimethylallyl diphosphate (DMAPP), two major building blocks of isoprenoid compounds. Catalyzes the conversion of 4-diphosphocytidyl-2-C-methyl-D-erythritol 2-phosphate (CDP-ME2P) to 2-C-methyl-D-erythritol 2,4-cyclodiphosphate (ME-CPP) with a corresponding release of cytidine 5-monophosphate (CMP). This Thermotoga maritima (strain ATCC 43589 / DSM 3109 / JCM 10099 / NBRC 100826 / MSB8) protein is 2-C-methyl-D-erythritol 2,4-cyclodiphosphate synthase.